We begin with the raw amino-acid sequence, 344 residues long: Follistatin (344 aa).

The signal sequence occupies residues 1–29 (MVRARHQPGGLCLLLLLLCQFMEDRSAQA). Residues 30–103 (GNCWLRQAKN…TCENVDCGPG (74 aa)) form the TB domain. Intrachain disulfides connect Cys32-Cys55, Cys42-Cys88, Cys56-Cys91, Cys95-Cys106, Cys100-Cys116, Cys118-Cys150, Cys122-Cys143, Cys132-Cys164, Cys168-Cys179, Cys173-Cys189, Cys192-Cys225, Cys196-Cys218, Cys207-Cys239, Cys245-Cys256, Cys250-Cys267, Cys270-Cys302, Cys274-Cys295, and Cys284-Cys316. Residues 94–117 (TCENVDCGPGKKCRMNKKNKPRCV) enclose the Follistatin-like 1 domain. One can recognise a Kazal-like 1 domain in the interval 112–166 (NKPRCVCAPDCSNITWKGPVCGLDGKTYRNECALLKARCKEQPELEVQYQGRCKK). N-linked (GlcNAc...) asparagine glycosylation occurs at Asn124. One can recognise a Follistatin-like 2 domain in the interval 167-190 (TCRDVFCPGSSTCVVDQTNNAYCV). Residues 186–241 (NAYCVTCNRICPEPASSEQYLCGNDGVTYSSACHLRKATCLLGRSIGLAYEGKCIK) enclose the Kazal-like 2 domain. The region spanning 244–268 (SCEDIQCTGGKKCLWDFKVGRGRCS) is the Follistatin-like 3 domain. The Kazal-like 3 domain occupies 264 to 318 (RGRCSLCDELCPDSKSDEPVCASDNATYASECAMKEAACSSGVLLEVKHSGSCNS). The N-linked (GlcNAc...) asparagine glycan is linked to Asn288. The disordered stretch occupies residues 314 to 344 (GSCNSISEDTEEEEEDEDQDYSFPISSILEW). Over residues 321-333 (EDTEEEEEDEDQD) the composition is skewed to acidic residues.

Interacts with GDF11. Interacts with activin A/INHBA. Interacts with MYOSTATIN/MSTN. Isoform 1 is the predominant isoform in serum but is undetectable in follicular fluid. In the embryo, strong expression is seen in the palatal epithelia, including the medial edge epithelial and midline epithelial seam of the palatal shelves. Less pronounced expression is also seen throughout the palatal shelf and tongue mesenchyme.

It localises to the secreted. The protein localises to the nucleus. Its subcellular location is the nucleolus. Its function is as follows. Multifunctional regulatory protein whose primary function is to antagonize members of the transforming growth factor beta (TGF-beta) superfamily including activin, myostatin, GDF11 or bone morphogenetic proteins (BMPs). Mechanistically, binds to these ligands in the extracellular space, blocking their type II receptor-binding site to inhibit downstream signaling. Plays an essential role in muscle fiber formation and growth both by preventing the repressive effects of myostatin and through SMAD3/AKT/mTOR signaling independently of myostatin. Also promotes neural differentiation by antagonizing the action BMP4. Acts as a specific inhibitor of the biosynthesis and secretion of pituitary follicle stimulating hormone (FSH) by sequestering activin A/INHBA. On the other hand, translocates into the nucleus where it down-regulates rRNA synthesis and ribosome biogenesis to maintain cellular energy homeostasis by binding to rDNA. The chain is Follistatin from Homo sapiens (Human).